The primary structure comprises 60 residues: LKCNKLIPLAYKTCPAGKNLCYKMFMVAAPKVPVKRGCIDACPKNSLLVKYVCCNTDRCN.

Disulfide bonds link Cys-3–Cys-21, Cys-14–Cys-38, Cys-42–Cys-53, and Cys-54–Cys-59.

The protein belongs to the three-finger toxin family. Short-chain subfamily. Type IA cytotoxin sub-subfamily. In terms of assembly, monomer in solution; Homodimer and oligomer in the presence of negatively charged lipids forming a pore with a size ranging between 20 and 30 Angstroms. Expressed by the venom gland.

Its subcellular location is the secreted. The protein resides in the target cell membrane. Its function is as follows. Shows cytolytic activity on many different cells by forming pore in lipid membranes. In vivo, increases heart rate or kills the animal by cardiac arrest. In addition, it binds to heparin with high affinity, interacts with Kv channel-interacting protein 1 (KCNIP1) in a calcium-independent manner, and binds to integrin alpha-V/beta-3 (ITGAV/ITGB3) with moderate affinity. This is Cytotoxin 5 from Naja kaouthia (Monocled cobra).